The following is a 185-amino-acid chain: Ribosome-recycling factor (185 aa).

The protein belongs to the RRF family.

Its subcellular location is the cytoplasm. Its function is as follows. Responsible for the release of ribosomes from messenger RNA at the termination of protein biosynthesis. May increase the efficiency of translation by recycling ribosomes from one round of translation to another. The sequence is that of Ribosome-recycling factor from Photobacterium profundum (strain SS9).